The sequence spans 790 residues: Threonine--tRNA ligase 2, cytoplasmic (790 aa).

At Ala2 the chain carries N-acetylalanine. A coiled-coil region spans residues 13–68 (SRLQRQEEDIRWLCAEVQRLRDEQLRGPERGQAEGPRLTREVAQLQAENRDLHQRL). Positions 80-117 (RTEAGRAAAHEPPTQNQEKDTKKKRLKQSEPGREVKQP) are disordered. A compositionally biased stretch (basic and acidic residues) spans 96–117 (QEKDTKKKRLKQSEPGREVKQP). In terms of domain architecture, TGS spans 148-210 (NVISVRVAGG…EGDSTVELLM (63 aa)). A Phosphoserine modification is found at Ser441. The Nuclear localization signal motif lies at 774–780 (KLKNLKK).

This sequence belongs to the class-II aminoacyl-tRNA synthetase family. As to quaternary structure, may be a component of the multisynthetase complex (MSC), a large multi-subunit complex which contains at least eight different aminoacyl-tRNA synthetases plus three auxillary subunits AIMP1, AIMP2 and EEF1E1. Interacts with the MSC components EPRS1, AIMP1, AIMP2 and KARS1. Ubiquitous (at protein level). Strongly expressed in muscle (at protein level). Moderately expressed in heart and liver (at protein level). Weakly expressed in stomach, kidney, testis, spleen, brain, fat and lung (at protein level).

The protein resides in the cytoplasm. It is found in the nucleus. It carries out the reaction tRNA(Thr) + L-threonine + ATP = L-threonyl-tRNA(Thr) + AMP + diphosphate + H(+). Its function is as follows. Catalyzes the attachment of threonine to tRNA(Thr) in a two-step reaction: threonine is first activated by ATP to form Thr-AMP and then transferred to the acceptor end of tRNA(Thr). Also edits incorrectly charged tRNA(Thr) via its editing domain, at the post-transfer stage. The chain is Threonine--tRNA ligase 2, cytoplasmic (Tars3) from Mus musculus (Mouse).